Reading from the N-terminus, the 201-residue chain is MDYPEPIAKLINSYTKLPGIGPKTATRLAFYTLGMQEDDVVDFSKSLLSAKKDLTFCRICGNITENSVNPCAICQDKSRDQSTVFVVENSRDVMAMENTRDYYGLYHVLNGVISPSAGTGPEDINLPSLIRRLSDHQEINEVIVGTNANAEGEATAMYLARLLKPAGIKVTRLAHGLAVGSDIDYADQLTLIKAVQGRTEL.

A C4-type zinc finger spans residues C57 to C74. The Toprim domain occupies S82 to A178.

Belongs to the RecR family.

May play a role in DNA repair. It seems to be involved in an RecBC-independent recombinational process of DNA repair. It may act with RecF and RecO. The protein is Recombination protein RecR of Leuconostoc citreum (strain KM20).